Consider the following 664-residue polypeptide: METPSQRRATRSGAQASSTPLSPTRITRLQEKEDLQELNDRLAVYIDRVRSLETENAGLRLRITESEEVVSREVSGIKSAYEAELGDARKTLDSVAKERARLQLELSKVREEFKELKARNTKKEGDLMAAQARLKDLEALLNSKEAALSTALSEKRTLEGELHDLRGQVAKLEAALGEAKKQLQDEMLRRVDAENRLQTLKEELDFQKNIYSEELRETKRRHETRLVEIDNGKQREFESRLADALQDLRAQHEDQVEQYKKELEKTYSAKLDNARQSAERNSNLVGAAHEELQQSRIRIDSLSAQLSQLQKQLAAKEAKLRDLEDSLARERDTSRRLLADKEREMAEMRARMQQQLDEYQELLDIKLALDMEIHAYRKLLEGEEERLRLSPSPTSQRSRGRASSHSSQTQSGGSVTKKRKLESSESRSSFSQHARTSGRVAVEEVDEEGKFVRLRNKSNEDQSMGNWQIKRQNGDDPLLTYRFPPKFTLKAGQVVTIWAAGAGATHSPPADLVWKSQNTWGCGNSLRTALINSTGEEVAMRKLVRSVTMIEDDEDEDGDDLLHHHHGSHGSSSGDPAEYNLRSRTVLCGTCGQPADKASASSSGAQVGGSISSGSSASSVTVTRSYRSVGGSGGGSFGDNLVTRSYLLGNSRPRTQSPQNCSIM.

An N-acetylmethionine modification is found at Met1. A disordered region spans residues 1-24 (METPSQRRATRSGAQASSTPLSPT). The interval 1 to 33 (METPSQRRATRSGAQASSTPLSPTRITRLQEKE) is head. The interaction with MLIP stretch occupies residues 1-130 (METPSQRRAT…TKKEGDLMAA (130 aa)). Thr3 carries the phosphothreonine modification. The residue at position 5 (Ser5) is a Phosphoserine. At Thr10 the chain carries Phosphothreonine. A phosphoserine mark is found at Ser12 and Ser18. Phosphothreonine is present on Thr19. Ser22 carries the phosphoserine modification. The IF rod domain maps to 31–387 (EKEDLQELND…KLLEGEEERL (357 aa)). Position 32 is an N6-acetyllysine; alternate (Lys32). At Lys32 the chain carries N6-succinyllysine; alternate. Lys32 is covalently cross-linked (Glycyl lysine isopeptide (Lys-Gly) (interchain with G-Cter in SUMO2); alternate). The segment at 34–70 (DLQELNDRLAVYIDRVRSLETENAGLRLRITESEEVV) is coil 1A. Ser51, Ser66, and Ser71 each carry phosphoserine. Residues 71 to 80 (SREVSGIKSA) are linker 1. N6-acetyllysine is present on residues Lys78 and Lys97. The interval 81–218 (YEAELGDARK…NIYSEELRET (138 aa)) is coil 1B. Residue Lys97 forms a Glycyl lysine isopeptide (Lys-Gly) (interchain with G-Cter in SUMO2) linkage. At Ser107 the chain carries Phosphoserine. Residues Lys108, Lys114, Lys123, Lys135, Lys144, and Lys155 each carry the N6-acetyllysine modification. At Lys171 the chain carries N6-acetyllysine; alternate. Position 171 is an N6-succinyllysine; alternate (Lys171). A Glycyl lysine isopeptide (Lys-Gly) (interchain with G-Cter in SUMO2); alternate cross-link involves residue Lys171. An N6-acetyllysine mark is found at Lys180, Lys201, and Lys208. A Glycyl lysine isopeptide (Lys-Gly) (interchain with G-Cter in SUMO2); alternate cross-link involves residue Lys201. A Glycyl lysine isopeptide (Lys-Gly) (interchain with G-Cter in SUMO); alternate cross-link involves residue Lys201. A Glycyl lysine isopeptide (Lys-Gly) (interchain with G-Cter in SUMO2) cross-link involves residue Lys208. Residue Ser212 is modified to Phosphoserine. Glycyl lysine isopeptide (Lys-Gly) (interchain with G-Cter in SUMO2) cross-links involve residues Lys219 and Lys233. The segment at 219–242 (KRRHETRLVEIDNGKQREFESRLA) is linker 2. 4 positions are modified to N6-acetyllysine: Lys233, Lys260, Lys265, and Lys270. Positions 243–383 (DALQDLRAQH…HAYRKLLEGE (141 aa)) are coil 2. Residue Lys260 forms a Glycyl lysine isopeptide (Lys-Gly) (interchain with G-Cter in SUMO2); alternate linkage. Lys270 is covalently cross-linked (Glycyl lysine isopeptide (Lys-Gly) (interchain with G-Cter in SUMO2); alternate). Ser277, Ser282, Ser301, and Ser307 each carry phosphoserine. Lys311 participates in a covalent cross-link: Glycyl lysine isopeptide (Lys-Gly) (interchain with G-Cter in SUMO2); alternate. Residues Lys311, Lys316, and Lys341 each carry the N6-acetyllysine modification. Glycyl lysine isopeptide (Lys-Gly) (interchain with G-Cter in SUMO2) cross-links involve residues Lys366 and Lys378. The segment at 384–442 (EERLRLSPSPTSQRSRGRASSHSSQTQSGGSVTKKRKLESSESRSSFSQHARTSGRVAV) is disordered. The tail stretch occupies residues 384–664 (EERLRLSPSP…TQSPQNCSIM (281 aa)). Phosphoserine is present on residues Ser390, Ser392, Ser395, Ser398, Ser403, Ser404, Ser406, Ser407, and Ser414. Residues 403–414 (SSHSSQTQSGGS) are compositionally biased toward low complexity. Residue Thr416 is modified to Phosphothreonine. Position 417 is an N6-acetyllysine (Lys417). Residues Lys417 and Lys420 each participate in a glycyl lysine isopeptide (Lys-Gly) (interchain with G-Cter in SUMO2) cross-link. The Nuclear localization signal motif lies at 417 to 422 (KKRKLE). Residues Ser423, Ser426, Ser429, and Ser431 each carry the phosphoserine modification. The LTD domain occupies 428-545 (SSFSQHARTS…EEVAMRKLVR (118 aa)). Lys450 is covalently cross-linked (Glycyl lysine isopeptide (Lys-Gly) (interchain with G-Cter in SUMO2); alternate). Residues Lys450 and Lys457 each carry the N6-acetyllysine modification. Residues Ser458 and Ser463 each carry the phosphoserine modification. Glycyl lysine isopeptide (Lys-Gly) (interchain with G-Cter in SUMO2) cross-links involve residues Lys470 and Lys486. Residue Lys486 is modified to N6-acetyllysine. A phosphothreonine mark is found at Thr496 and Thr505. Phosphoserine occurs at positions 533 and 546. Position 548 is a phosphothreonine (Thr548). Positions 555 to 577 (DEDGDDLLHHHHGSHGSSSGDPA) are disordered. Phosphoserine occurs at positions 568 and 571. Residue Lys597 forms a Glycyl lysine isopeptide (Lys-Gly) (interchain with G-Cter in SUMO2); alternate linkage. A Glycyl lysine isopeptide (Lys-Gly) (interchain with G-Cter in SUMO1); alternate cross-link involves residue Lys597. Positions 598 to 620 (ASASSSGAQVGGSISSGSSASSV) are disordered. Ser612, Ser613, Ser616, and Ser619 each carry phosphoserine. 2 O-linked (GlcNAc) serine glycosylation sites follow: Ser625 and Ser628. 3 positions are modified to phosphoserine: Ser628, Ser632, and Ser636. Residues 647–661 (LLGNSRPRTQSPQNC) constitute a propeptide, removed in Lamin-A/C form. Cys661 carries the post-translational modification Cysteine methyl ester. Residue Cys661 is the site of S-farnesyl cysteine attachment. A propeptide spans 662 to 664 (SIM) (removed in Prelamin-A/C form and in Lamin-A/C form).

Belongs to the intermediate filament family. As to quaternary structure, homodimer of lamin A and lamin C. Lamin dimers then assemble into dimeric head-to-tail polymers. Ultimately, two head-to-tail polymers assemble laterally into a protofilament with a uniformly shaped rod of 3.5 nm in diameter. Interacts with lamin-associated polypeptides IA, IB and TMPO-alpha, RB1 and with emerin. Interacts with SREBF1, SREBF2, SUN2 and TMEM43. Interacts with TMEM201. Proteolytically processed isoform A interacts with NARF. Interacts with SUN1. Interacts with MLIP. Interacts with DMPK; may regulate nuclear envelope stability. Interacts with SUV39H1; the interaction increases stability of SUV39H1. Interacts with SYNE2. Interacts with ITSN1 isoform 2. Interacts with IFFO1; enables the formation of an interior nucleoskeleton that is recruited to DNA double-strand breaks. Interacts with EMD. In terms of assembly, interacts (via C-terminus) with LEMD2 (via N-terminus) (in vitro). In terms of processing, proteolytic cleavage of the C-terminal of 18 residues of prelamin-A/C results in the production of lamin-A/C. The prelamin-A/C maturation pathway includes farnesylation of CAAX motif by protein farnesyltransferase (FNTA and FNTB), removal of the last three amino acids (-AAX) by RCE1/FACE2 and/or ZMPSTE24, methylation of the C-terminal cysteine by ICMT and endoproteolytic removal of the last 15 C-terminal amino acids by ZMPSTE24. Proteolytic cleavage requires prior farnesylation and methylation, and absence of these blocks cleavage. Post-translationally, farnesylation of prelamin-A/C facilitates nuclear envelope targeting. Phosphorylation plays a key role in lamin organization, subcellular localization and nuclear envelope disintegration. Phosphorylation by CDK1 at Ser-22 and Ser-392 at the onset of mitosis drives lamin disassembly and nuclear envelope breakdown. Phosphorylation at Ser-22 and Ser-392 during interphase promotes localization to the nucleoplasm and regulates lamina assembly. Phosphorylation at Ser-22, Ser-392 and Ser-628 during interphase causes redistribution between the nucleus and the cytoplasm. Phosphorylation at Ser-22 by CDK1 regulates matrix stiffness. Phosphorylation status of Ser-22 determines its localization between double-strand break (DSB) sites and the nuclear matrix. Phosphorylated by ATR at Ser-282 in response to DNA damage, leading to lamin disassembly and nuclear envelope rupture. Phosphorylation also regulates stability in micronuclei arising from genome instability: phosphorylation at Ser-395 by ATR in response to genome instability and double-stranded DNA breaks primes LMNA for subsequent phosphorylation at Ser-392 by CDK1 and micronuclei envelope rupture. The rupture of micronuclear envelope triggers the cGAS-STING pathway thereby activating the type I interferon response and innate immunity. In terms of processing, acetylation by KAT8 is required for nuclear architecture. Post-translationally, sumoylation is necessary for the localization to the nuclear envelope.

The protein resides in the nucleus lamina. Its subcellular location is the nucleus envelope. It localises to the nucleus. It is found in the nucleoplasm. The protein localises to the nucleus matrix. In terms of biological role, lamins are intermediate filament proteins that assemble into a filamentous meshwork, and which constitute the major components of the nuclear lamina, a fibrous layer on the nucleoplasmic side of the inner nuclear membrane. Lamins provide a framework for the nuclear envelope, bridging the nuclear envelope and chromatin, thereby playing an important role in nuclear assembly, chromatin organization, nuclear membrane and telomere dynamics. Lamin A and C also regulate matrix stiffness by conferring nuclear mechanical properties. The structural integrity of the lamina is strictly controlled by the cell cycle, as seen by the disintegration and formation of the nuclear envelope in prophase and telophase, respectively. Lamin A and C are present in equal amounts in the lamina of mammals. Also invoved in DNA repair: recruited by DNA repair proteins XRCC4 and IFFO1 to the DNA double-strand breaks (DSBs) to prevent chromosome translocation by immobilizing broken DNA ends. Required for normal development of peripheral nervous system and skeletal muscle and for muscle satellite cell proliferation. Required for osteoblastogenesis and bone formation. Also prevents fat infiltration of muscle and bone marrow, helping to maintain the volume and strength of skeletal muscle and bone. Required for cardiac homeostasis. Its function is as follows. Prelamin-A/C can accelerate smooth muscle cell senescence. It acts to disrupt mitosis and induce DNA damage in vascular smooth muscle cells (VSMCs), leading to mitotic failure, genomic instability, and premature senescence. The polypeptide is Prelamin-A/C (LMNA) (Sus scrofa (Pig)).